Reading from the N-terminus, the 354-residue chain is Adenine deaminase (354 aa).

The Zn(2+) site is built by H20, H22, and H200. The active-site Proton donor is the E203. D281 lines the Zn(2+) pocket. D282 contacts substrate.

The protein belongs to the metallo-dependent hydrolases superfamily. Adenosine and AMP deaminases family. Adenine deaminase type 2 subfamily. Zn(2+) serves as cofactor.

The catalysed reaction is adenine + H2O + H(+) = hypoxanthine + NH4(+). Catalyzes the hydrolytic deamination of adenine to hypoxanthine. Plays an important role in the purine salvage pathway and in nitrogen catabolism. The sequence is that of Adenine deaminase from Cupriavidus metallidurans (strain ATCC 43123 / DSM 2839 / NBRC 102507 / CH34) (Ralstonia metallidurans).